Here is a 605-residue protein sequence, read N- to C-terminus: UvrABC system protein C (605 aa).

The GIY-YIG domain occupies 14–92 (QSCGVYKMVG…IKSLKPLYNI (79 aa)). The region spanning 202 to 237 (KEVKEQLLFTMRKCSSEENYELAAIYRDRVKFLEQI) is the UVR domain.

The protein belongs to the UvrC family. Interacts with UvrB in an incision complex.

It localises to the cytoplasm. Functionally, the UvrABC repair system catalyzes the recognition and processing of DNA lesions. UvrC both incises the 5' and 3' sides of the lesion. The N-terminal half is responsible for the 3' incision and the C-terminal half is responsible for the 5' incision. The protein is UvrABC system protein C of Wolbachia sp. subsp. Drosophila simulans (strain wRi).